The sequence spans 42 residues: Histone H1B (42 aa).

The region spanning 1–42 (TYYELIKAAILALKERNGSSAQAIKKYILENNKIEFQQTFLR) is the H15 domain.

Belongs to the histone H1/H5 family.

It is found in the nucleus. Its subcellular location is the chromosome. Histones H1 are necessary for the condensation of nucleosome chains into higher-order structures. The chain is Histone H1B from Olisthodiscus luteus (Marine phytoflagellate).